The following is a 154-amino-acid chain: Nitrogen regulatory protein (154 aa).

Residues 6 to 150 form the PTS EIIA type-2 domain; it reads QILTPGRSLV…EALYQIVVDV (145 aa). H68 acts as the Tele-phosphohistidine intermediate in catalysis.

The protein localises to the cytoplasm. In terms of biological role, seems to have a role in regulating nitrogen assimilation. The sequence is that of Nitrogen regulatory protein (ptsN) from Pseudomonas aeruginosa (strain ATCC 15692 / DSM 22644 / CIP 104116 / JCM 14847 / LMG 12228 / 1C / PRS 101 / PAO1).